Reading from the N-terminus, the 311-residue chain is Olfactory receptor 287 (311 aa).

Over 1 to 27 the chain is Extracellular; the sequence is MAWSTGQNLSTPGPFILLGFPGPRSMR. Asn-8 carries an N-linked (GlcNAc...) asparagine glycan. Residues 28–53 form a helical membrane-spanning segment; sequence IGLFLLFLVMYLLTVVGNLAIISLVG. The Cytoplasmic segment spans residues 54-60; it reads AHRCLQT. The helical transmembrane segment at 61 to 82 threads the bilayer; the sequence is PMYFFLCNLSFLEIWFTTACVP. At 83–103 the chain is on the extracellular side; it reads KTLATFAPRGGVISLAGCATQ. A disulfide bond links Cys-100 and Cys-192. A helical transmembrane segment spans residues 104-123; that stretch reads MYFVFSLGCTEYFLLAVMAY. Over 124 to 142 the chain is Cytoplasmic; it reads DRYLAICLPLRYGGIMTPG. Residues 143–161 traverse the membrane as a helical segment; it reads LAMRLALGSWLCGFSAITV. Residues 162–199 lie on the Extracellular side of the membrane; the sequence is PATLIARLSFCGSRVINHFFCDISPWIVLSCTDTQVVE. Residues 200–222 traverse the membrane as a helical segment; that stretch reads LVSFGIAFCVILGSCGITLVSYA. At 223–239 the chain is on the cytoplasmic side; sequence YIITTIIKIPSARGRHR. A helical membrane pass occupies residues 240–263; the sequence is AFSTCSSHLTVVLIWYGSTIFLHV. At 264-275 the chain is on the extracellular side; sequence RTSVESSLDLTK. A helical membrane pass occupies residues 276–295; sequence AITVLNTIVTPVLNPFIYTL. Residues 296-311 are Cytoplasmic-facing; it reads RNKDVKEALRRTVKGK.

This sequence belongs to the G-protein coupled receptor 1 family. In terms of tissue distribution, olfactory epithelium.

Its subcellular location is the cell membrane. Odorant receptor. This Rattus norvegicus (Rat) protein is Olfactory receptor 287 (Olr287).